A 299-amino-acid chain; its full sequence is HTH-type transcriptional regulator ArgP (299 aa).

An HTH lysR-type domain is found at 4-60; sequence PDYRTLQALDAVIRERGFERAAQKLCITQSAVSQRIKQLENMFGQPLLVRTVPPRPT. Positions 21 to 40 form a DNA-binding region, H-T-H motif; that stretch reads FERAAQKLCITQSAVSQRIK.

It belongs to the LysR transcriptional regulatory family. In terms of assembly, homodimer.

Controls the transcription of genes involved in arginine and lysine metabolism. In Erwinia tasmaniensis (strain DSM 17950 / CFBP 7177 / CIP 109463 / NCPPB 4357 / Et1/99), this protein is HTH-type transcriptional regulator ArgP.